The chain runs to 140 residues: Small ribosomal subunit protein uS19 (140 aa).

Residues 120–140 (RPKHSAPGIGATRSSAHVSKK) form a disordered region. The span at 131–140 (TRSSAHVSKK) shows a compositional bias: polar residues.

It belongs to the universal ribosomal protein uS19 family.

Its function is as follows. Protein S19 forms a complex with S13 that binds strongly to the 16S ribosomal RNA. The protein is Small ribosomal subunit protein uS19 of Nanoarchaeum equitans (strain Kin4-M).